Consider the following 95-residue polypeptide: Co-chaperonin GroES (95 aa).

Belongs to the GroES chaperonin family. As to quaternary structure, heptamer of 7 subunits arranged in a ring. Interacts with the chaperonin GroEL.

The protein localises to the cytoplasm. Functionally, together with the chaperonin GroEL, plays an essential role in assisting protein folding. The GroEL-GroES system forms a nano-cage that allows encapsulation of the non-native substrate proteins and provides a physical environment optimized to promote and accelerate protein folding. GroES binds to the apical surface of the GroEL ring, thereby capping the opening of the GroEL channel. The polypeptide is Co-chaperonin GroES (Deinococcus radiodurans (strain ATCC 13939 / DSM 20539 / JCM 16871 / CCUG 27074 / LMG 4051 / NBRC 15346 / NCIMB 9279 / VKM B-1422 / R1)).